The chain runs to 370 residues: Putative F-box protein At1g46984 (370 aa).

Residues 18–64 form the F-box domain; it reads YTQLSTLPIDLIIEILSRLPMNSIAICRLVSKQWASILQSSDFTESF.

In Arabidopsis thaliana (Mouse-ear cress), this protein is Putative F-box protein At1g46984.